The primary structure comprises 356 residues: Anthranilate phosphoribosyltransferase (356 aa).

5-phospho-alpha-D-ribose 1-diphosphate-binding positions include glycine 96, 99 to 100 (GD), threonine 104, 106 to 109 (NIST), 124 to 132 (KHGNRSASG), and serine 136. Glycine 96 contributes to the anthranilate binding site. A Mg(2+)-binding site is contributed by serine 108. Asparagine 127 is an anthranilate binding site. An anthranilate-binding site is contributed by arginine 182. Aspartate 241 and glutamate 242 together coordinate Mg(2+).

Belongs to the anthranilate phosphoribosyltransferase family. As to quaternary structure, homodimer. Mg(2+) is required as a cofactor.

It catalyses the reaction N-(5-phospho-beta-D-ribosyl)anthranilate + diphosphate = 5-phospho-alpha-D-ribose 1-diphosphate + anthranilate. Its pathway is amino-acid biosynthesis; L-tryptophan biosynthesis; L-tryptophan from chorismate: step 2/5. Catalyzes the transfer of the phosphoribosyl group of 5-phosphorylribose-1-pyrophosphate (PRPP) to anthranilate to yield N-(5'-phosphoribosyl)-anthranilate (PRA). The protein is Anthranilate phosphoribosyltransferase of Trichodesmium erythraeum (strain IMS101).